The primary structure comprises 211 residues: Large ribosomal subunit protein uL4 (211 aa).

Positions 44 to 90 are disordered; the sequence is ERQGTHSTLTKGEVRGGGKKPWRQKHTGKARTGSTRNPHWTGGGVVF. A compositionally biased stretch (basic residues) spans 60 to 72; that stretch reads GGKKPWRQKHTGK.

This sequence belongs to the universal ribosomal protein uL4 family. Part of the 50S ribosomal subunit.

One of the primary rRNA binding proteins, this protein initially binds near the 5'-end of the 23S rRNA. It is important during the early stages of 50S assembly. It makes multiple contacts with different domains of the 23S rRNA in the assembled 50S subunit and ribosome. In terms of biological role, forms part of the polypeptide exit tunnel. In Ureaplasma urealyticum serovar 10 (strain ATCC 33699 / Western), this protein is Large ribosomal subunit protein uL4.